Consider the following 435-residue polypeptide: Trigger factor (435 aa).

Positions 161–246 (DDQVTLDFEG…LTKVEEQILP (86 aa)) constitute a PPIase FKBP-type domain.

It belongs to the FKBP-type PPIase family. Tig subfamily.

It is found in the cytoplasm. The catalysed reaction is [protein]-peptidylproline (omega=180) = [protein]-peptidylproline (omega=0). Its function is as follows. Involved in protein export. Acts as a chaperone by maintaining the newly synthesized protein in an open conformation. Functions as a peptidyl-prolyl cis-trans isomerase. The chain is Trigger factor from Psychromonas ingrahamii (strain DSM 17664 / CCUG 51855 / 37).